A 397-amino-acid polypeptide reads, in one-letter code: ORC1-type DNA replication protein 8 (397 aa).

ATP-binding positions include 61-65, Tyr211, and Arg223; that span reads VGKTA.

This sequence belongs to the CDC6/cdc18 family.

Its function is as follows. Involved in regulation of DNA replication. In Halobacterium salinarum (strain ATCC 700922 / JCM 11081 / NRC-1) (Halobacterium halobium), this protein is ORC1-type DNA replication protein 8 (orc8).